Consider the following 736-residue polypeptide: Fidgetin (736 aa).

4 disordered regions span residues 118–155 (GMTP…CGNH), 180–248 (TYSG…YSPG), 272–295 (IPGY…GSSA), and 341–438 (STRG…AEEQ). A compositionally biased stretch (low complexity) spans 128 to 150 (VTASVGSSTGVASSLSEPSYSSS). The segment covering 205-214 (QPPPPPPPTL) has biased composition (pro residues). Over residues 216–232 (PSYNTSSPNLSSYNYPP) the composition is skewed to low complexity. A compositionally biased stretch (polar residues) spans 352-368 (DTSSLAFKPTKQSMPTD). ATP-binding positions include A467 and 507–512 (GTGRTL).

The protein belongs to the AAA ATPase family.

It is found in the nucleus matrix. The protein localises to the cytoplasm. It localises to the cytoskeleton. The protein resides in the microtubule organizing center. Its subcellular location is the centrosome. In terms of biological role, ATP-dependent microtubule severing protein. Severs microtubules along their length and depolymerizes their ends, primarily the minus-end, suppressing microtubule growth from and attachment to centrosomes. Microtubule severing may promote rapid reorganization of cellular microtubule arrays and the release of microtubules from the centrosome following nucleation. Microtubule release from the mitotic spindle poles may allow depolymerization of the microtubule end proximal to the spindle pole, leading to poleward microtubule flux and poleward motion of chromosome. The sequence is that of Fidgetin (fign) from Danio rerio (Zebrafish).